The primary structure comprises 275 residues: Ribosomal RNA small subunit methyltransferase A (275 aa).

S-adenosyl-L-methionine is bound by residues asparagine 19, leucine 21, glycine 46, glutamate 71, aspartate 94, and asparagine 117.

It belongs to the class I-like SAM-binding methyltransferase superfamily. rRNA adenine N(6)-methyltransferase family. RsmA subfamily.

Its subcellular location is the cytoplasm. The enzyme catalyses adenosine(1518)/adenosine(1519) in 16S rRNA + 4 S-adenosyl-L-methionine = N(6)-dimethyladenosine(1518)/N(6)-dimethyladenosine(1519) in 16S rRNA + 4 S-adenosyl-L-homocysteine + 4 H(+). In terms of biological role, specifically dimethylates two adjacent adenosines (A1518 and A1519) in the loop of a conserved hairpin near the 3'-end of 16S rRNA in the 30S particle. May play a critical role in biogenesis of 30S subunits. The chain is Ribosomal RNA small subunit methyltransferase A from Burkholderia orbicola (strain MC0-3).